Consider the following 231-residue polypeptide: Large ribosomal subunit protein uL1 (231 aa).

Belongs to the universal ribosomal protein uL1 family. Part of the 50S ribosomal subunit.

Its function is as follows. Binds directly to 23S rRNA. The L1 stalk is quite mobile in the ribosome, and is involved in E site tRNA release. Functionally, protein L1 is also a translational repressor protein, it controls the translation of the L11 operon by binding to its mRNA. This is Large ribosomal subunit protein uL1 from Halalkalibacterium halodurans (strain ATCC BAA-125 / DSM 18197 / FERM 7344 / JCM 9153 / C-125) (Bacillus halodurans).